Consider the following 510-residue polypeptide: ATP synthase subunit alpha (510 aa).

169–176 (GDRQTGKT) serves as a coordination point for ATP.

Belongs to the ATPase alpha/beta chains family. F-type ATPases have 2 components, CF(1) - the catalytic core - and CF(0) - the membrane proton channel. CF(1) has five subunits: alpha(3), beta(3), gamma(1), delta(1), epsilon(1). CF(0) has four main subunits: a(1), b(1), b'(1) and c(9-12).

The protein localises to the cell inner membrane. The catalysed reaction is ATP + H2O + 4 H(+)(in) = ADP + phosphate + 5 H(+)(out). Produces ATP from ADP in the presence of a proton gradient across the membrane. The alpha chain is a regulatory subunit. This chain is ATP synthase subunit alpha, found in Rhodospirillum rubrum (strain ATCC 11170 / ATH 1.1.1 / DSM 467 / LMG 4362 / NCIMB 8255 / S1).